The chain runs to 473 residues: Reticulon-4 receptor (473 aa).

Positions 1 to 26 (MKRASAGGSRLLAWVLWLQAWQVAAP) are cleaved as a signal peptide. Intrachain disulfides connect C27-C33 and C31-C43. An LRRNT domain is found at 27-54 (CPGACVCYNEPKVTTSCPQQGLQAVPVG). 9 LRR repeats span residues 55–79 (IPAASQRIFLHGNRISHVPAASFRA), 81–103 (RNLTILWLHSNVLARIDAAAFTG), 104–128 (LALLEQLDLSDNAQLRSVDPATFHG), 129–152 (LGRLHTLHLDRCGLQELGPGLFRG), 153–176 (LAALQYLYLQDNALQALPDDTFRD), 178–200 (GNLTHLFLHGNRISSVPERAFRG), 202–224 (HSLDRLLLHQNRVAHVHPHAFRD), 225–248 (LGRLMTLYLFANNLSALPTEALAP), and 250–273 (RALQYLRLNDNPWVCDCRARPLWA). N82 is a glycosylation site (N-linked (GlcNAc...) asparagine). N-linked (GlcNAc...) asparagine glycosylation occurs at N179. An LRRCT domain is found at 260-310 (NPWVCDCRARPLWAWLQKFRGSSSEVPCSLPQRLAGRDLKRLAANDLQGCA). 3 disulfides stabilise this stretch: C264–C287, C266–C335, and C309–C336. The interval 346–447 (VLEPGRPASA…GGGTGDSEGS (102 aa)) is disordered. Residues 413-429 (PRRRPGCSRKNRTRSHC) show a composition bias toward basic residues. The segment covering 434–445 (AGSGGGGTGDSE) has biased composition (gly residues). S447 carries GPI-anchor amidated serine lipidation. Positions 448-473 (GALPSLTCSLTPLGLALVLWTVLGPC) are cleaved as a propeptide — removed in mature form.

The protein belongs to the Nogo receptor family. In terms of assembly, homodimer. Interacts with MAG. Interacts with RTN4. Interacts with NGFR. Interacts with LINGO1. Interacts with KIAA0319L. Interacts with OLFM1; this inhibits interaction with LINGO1 and NGFR. Interacts with OMG. Post-translationally, N-glycosylated. O-glycosylated. Contains terminal sialic acid groups on its glycan chains. Widespread in the brain but highest levels in the gray matter. Low levels in heart and kidney; not expressed in oligodendrocytes (white matter).

The protein resides in the cell membrane. The protein localises to the membrane raft. It localises to the cell projection. It is found in the dendrite. Its subcellular location is the axon. The protein resides in the perikaryon. In terms of biological role, receptor for RTN4, OMG and MAG. Functions as a receptor for the sialylated gangliosides GT1b and GM1. Besides, functions as a receptor for chondroitin sulfate proteoglycans. Can also bind heparin. Intracellular signaling cascades are triggered via the coreceptor NGFR. Signaling mediates activation of Rho and downstream reorganization of the actin cytoskeleton. Mediates axonal growth inhibition. Plays a role in regulating axon regeneration and neuronal plasticity in the adult central nervous system. Plays a role in postnatal brain development. Required for normal axon migration across the brain midline and normal formation of the corpus callosum. Protects motoneurons against apoptosis; protection against apoptosis is probably mediated via interaction with MAG. Acts in conjunction with RTN4 and LINGO1 in regulating neuronal precursor cell motility during cortical development. Like other family members, plays a role in restricting the number dendritic spines and the number of synapses that are formed during brain development. This is Reticulon-4 receptor (RTN4R) from Homo sapiens (Human).